A 569-amino-acid polypeptide reads, in one-letter code: Arylsulfatase I (569 aa).

The N-terminal stretch at 1-23 (MHTLTGFSLVSLLSFGYLSWDWA) is a signal peptide. Residues aspartate 55, aspartate 56, and cysteine 93 each contribute to the Ca(2+) site. Cysteine 93 functions as the Nucleophile in the catalytic mechanism. The residue at position 93 (cysteine 93) is a 3-oxoalanine (Cys). Lysine 147 contacts substrate. Histidine 149 is an active-site residue. Residue histidine 239 coordinates substrate. N-linked (GlcNAc...) asparagine glycosylation is found at asparagine 276 and asparagine 288. Positions 297 and 298 each coordinate Ca(2+). Lysine 315 lines the substrate pocket. Residues asparagine 466 and asparagine 496 are each glycosylated (N-linked (GlcNAc...) asparagine). The interval 510 to 539 (RAHPDFNGGAWGPWASDEEEEEEEGRARSF) is disordered.

The protein belongs to the sulfatase family. Requires Ca(2+) as cofactor. In terms of processing, the oxidation of Cys-93 residue to 3-oxoalanine (also known as C(alpha)-formylglycine) by SUMF1/Sulfatase-modifying factor 1, seems critical for catalytic activity. Expressed in placenta, in embryonic stem cells, fetal eyes and lens.

It is found in the secreted. Its subcellular location is the endoplasmic reticulum. Displays arylsulfatase activity at neutral pH, when co-expressed with SUMF1; arylsulfatase activity is measured in the secretion medium of retinal cell line, but no activity is recorded when measured in cell extracts. Lacks arylsulfatase activity. In Homo sapiens (Human), this protein is Arylsulfatase I (ARSI).